Reading from the N-terminus, the 330-residue chain is MYVFNFYPIPRKSINFRSDVDDLGFLRPWSPQEESGCKKQYEAWYSSYLPIVVRRRCRWEKENPRRNSHLLQRFVRKGIPHTFRKELWLRSCPSRADGVWQRHEVPDEVIKQIKLDLPRTFPDNKFLKTEGTRKTLGRALFAVAEHIPSVGYCQGLNFVAGVILLVVNDESRAIDLLVHLVSQRQEYYGKNMIGLRRDMHVLHSLLREHCPRVVVTLEKLDVGLDMLVGKWFVCWFVESLPMETVLRLWDCLIYEGDEWLFRIAVALFRSNMIAISSCESIDQLMTEVQNIGTSKAALYCHQLILKSAALSITNKSIEALRADAELAIPE.

The 179-residue stretch at 78-256 (GIPHTFRKEL…RLWDCLIYEG (179 aa)) folds into the Rab-GAP TBC domain.

This is Growth hormone-regulated TBC protein 6 (tbc-6) from Caenorhabditis elegans.